The chain runs to 184 residues: Ribosome-recycling factor (184 aa).

The protein belongs to the RRF family.

The protein localises to the cytoplasm. Its function is as follows. Responsible for the release of ribosomes from messenger RNA at the termination of protein biosynthesis. May increase the efficiency of translation by recycling ribosomes from one round of translation to another. In Caldicellulosiruptor bescii (strain ATCC BAA-1888 / DSM 6725 / KCTC 15123 / Z-1320) (Anaerocellum thermophilum), this protein is Ribosome-recycling factor.